A 663-amino-acid polypeptide reads, in one-letter code: Epithelial sodium channel subunit gamma-2 (663 aa).

Residues Met-1 to Trp-55 lie on the Cytoplasmic side of the membrane. The helical transmembrane segment at Ile-56–Leu-76 threads the bilayer. Topologically, residues Met-77–Cys-544 are extracellular. Intrachain disulfides connect Cys-101-Cys-286, Cys-209-Cys-217, Cys-263-Cys-270, Cys-375-Cys-460, Cys-397-Cys-456, Cys-401-Cys-452, Cys-410-Cys-437, and Cys-412-Cys-426. Residues Ser-545–Leu-565 form a helical membrane-spanning segment. Topologically, residues Arg-566–Phe-663 are cytoplasmic.

This sequence belongs to the amiloride-sensitive sodium channel (TC 1.A.6) family. SCNN1G subfamily. As to quaternary structure, component of the heterotrimeric epithelial sodium channel (ENaC) composed of an alpha/SCNN1A, a beta/SCNN1B and a gamma/SCNN1G subunit.

It localises to the apical cell membrane. It catalyses the reaction Na(+)(in) = Na(+)(out). With respect to regulation, originally identified and characterized by its inhibition by the diuretic drug amiloride. This is one of the three pore-forming subunits of the heterotrimeric epithelial sodium channel (ENaC), a critical regulator of sodium balance and fluid homeostasis. ENaC operates in epithelial tissues, where it mediates the electrodiffusion of sodium ions from extracellular fluid through the apical membrane of cells, with water following osmotically. The chain is Epithelial sodium channel subunit gamma-2 (scnn1g-b) from Xenopus laevis (African clawed frog).